The chain runs to 28 residues: Unknown protein from spot 154 of 2D-PAGE of etiolated coleoptile (28 aa).

The polypeptide is Unknown protein from spot 154 of 2D-PAGE of etiolated coleoptile (Zea mays (Maize)).